The following is a 249-amino-acid chain: tRNA pseudouridine synthase A (249 aa).

The active-site Nucleophile is Asp-53. Tyr-111 contributes to the substrate binding site.

Belongs to the tRNA pseudouridine synthase TruA family. In terms of assembly, homodimer.

The catalysed reaction is uridine(38/39/40) in tRNA = pseudouridine(38/39/40) in tRNA. Formation of pseudouridine at positions 38, 39 and 40 in the anticodon stem and loop of transfer RNAs. This is tRNA pseudouridine synthase A from Streptococcus equi subsp. zooepidemicus (strain MGCS10565).